Here is a 475-residue protein sequence, read N- to C-terminus: DnaB-like replicative helicase (475 aa).

Residues 165-444 form the SF4 helicase domain; that stretch reads YMNKARKVPF…STPTEVNEVA (280 aa). 197-204 contacts ATP; it reads AGVNVGKS. The interval 456 to 475 is interaction with the helicase assembly factor; it reads YQRNESTRAQLDALANELKF.

The protein belongs to the helicase family. DnaB subfamily. As to quaternary structure, homohexamer. The homohexamer is a trimer of asymmetric dimers. Interacts with the DNA primase; this interaction forms the active primosome complex, which is composed of 6 helicase and 1 primase subunits and expresses full helicase and primase activities. Interacts (via C-terminus) with the helicase assembly factor; this interaction brings about the rapid assembly of the helicase onto ssDNA. Part of the replicase complex that includes the DNA polymerase, the polymerase clamp, the clamp loader complex, the single-stranded DNA binding protein, the primase, the DnaB-like replicative helicase and the helicase assembly factor.

Its function is as follows. ATP-dependent DNA helicase essential for viral DNA replication and recombination. The helicase moves 5' -&gt; 3' on the lagging strand template, unwinding the DNA duplex ahead of the leading strand polymerase at the replication fork and generating ssDNA for both leading and lagging strand synthesis. Interaction with the primase allows the primase to initiate lagging strand synthesis and fully activates the helicase. Loaded by the helicase assembly factor on replication forks that begin at discrete replication origin sequences, as well as on forks that are created during recombination. In Escherichia coli (Bacteriophage T4), this protein is DnaB-like replicative helicase.